The sequence spans 172 residues: Transcriptional regulator TAC1 (172 aa).

Positions 1–28 (MENIKNPKNADDCSDSISKNSHQGVDDS) are disordered. The segment covering 15–28 (DSISKNSHQGVDDS) has biased composition (polar residues). The segment at 35–57 (YVCSFCIRGFSNAQALGGHMNIH) adopts a C2H2-type zinc-finger fold. The short motif at 156–160 (LDLEL) is the EAR-like (transcriptional repression) element.

As to expression, preferentially expressed in roots and flowers. Slightly expressed in leaves and stems.

Its subcellular location is the nucleus. In terms of biological role, activation factor which mediates telomerase activity and potentiates responses to auxin through the regulation of BT2. Binds in vitro to the DNA sequence 5'-GACAGTGTTAC-3' of the BT2 promoter. The chain is Transcriptional regulator TAC1 (TAC1) from Arabidopsis thaliana (Mouse-ear cress).